A 2545-amino-acid polypeptide reads, in one-letter code: uncharacterized protein (2545 aa).

Residues I17 to L37 traverse the membrane as a helical segment. Residues L131 to E161 are a coiled coil. Disordered regions lie at residues N348–T462, N587–I616, and R1214–R1238. Composition is skewed to basic and acidic residues over residues S354–Q371, K380–G391, and Q401–Q413. Residues N414–N435 show a composition bias toward low complexity. Basic and acidic residues-rich tracts occupy residues Q437 to E454 and M590 to P599. Residues S600–S613 show a composition bias toward polar residues. Positions N1219 to R1238 are enriched in basic and acidic residues. Residues K2303–L2337 are a coiled coil.

Its subcellular location is the membrane. This is an uncharacterized protein from Plasmodium falciparum (isolate 3D7).